The chain runs to 293 residues: 16S rRNA (guanine(1405)-N(7))-methyltransferase (293 aa).

Residues Phe-47, 80–82 (HAS), Arg-86, Ala-111, Asp-134, 160–161 (DL), Leu-176, and Gln-185 each bind S-adenosyl-L-methionine. A compositionally biased stretch (low complexity) spans 258-274 (GRPAPAEGAAEPGATRP). The segment at 258–293 (GRPAPAEGAAEPGATRPVVDVPATARPDADRVDPTG) is disordered. Positions 284-293 (PDADRVDPTG) are enriched in basic and acidic residues.

This sequence belongs to the methyltransferase superfamily. Aminoglycoside resistance family.

It carries out the reaction guanosine(1405) in 16S rRNA + S-adenosyl-L-methionine = N(7)-methylguanosine(1405) in 16S rRNA + S-adenosyl-L-homocysteine. Functionally, specifically methylates the N(7) position of guanine 1405 in 16S rRNA. Confers resistance to aminoglycosides. The sequence is that of 16S rRNA (guanine(1405)-N(7))-methyltransferase (fmrO) from Micromonospora olivasterospora.